We begin with the raw amino-acid sequence, 197 residues long: Guanylate kinase (197 aa).

Positions 7-185 (GLIIILSSPS…TLKKIHEIIV (179 aa)) constitute a Guanylate kinase-like domain. 14-21 (SPSGTGKS) provides a ligand contact to ATP.

Belongs to the guanylate kinase family.

The protein resides in the cytoplasm. It catalyses the reaction GMP + ATP = GDP + ADP. In terms of biological role, essential for recycling GMP and indirectly, cGMP. This Rickettsia typhi (strain ATCC VR-144 / Wilmington) protein is Guanylate kinase.